The chain runs to 112 residues: Ribosome-binding factor A (112 aa).

Belongs to the RbfA family. In terms of assembly, monomer. Binds 30S ribosomal subunits, but not 50S ribosomal subunits or 70S ribosomes.

The protein localises to the cytoplasm. Functionally, one of several proteins that assist in the late maturation steps of the functional core of the 30S ribosomal subunit. Associates with free 30S ribosomal subunits (but not with 30S subunits that are part of 70S ribosomes or polysomes). Required for efficient processing of 16S rRNA. May interact with the 5'-terminal helix region of 16S rRNA. The sequence is that of Ribosome-binding factor A from Mycoplasma genitalium (strain ATCC 33530 / DSM 19775 / NCTC 10195 / G37) (Mycoplasmoides genitalium).